Here is a 331-residue protein sequence, read N- to C-terminus: DNA-directed RNA polymerase subunit alpha (331 aa).

An alpha N-terminal domain (alpha-NTD) region spans residues 1–225; it reads MLDIAMPKLE…QYSSIIADFN (225 aa). The tract at residues 243–331 is alpha C-terminal domain (alpha-CTD); the sequence is PSEIYDMPIE…AARLNDGSAE (89 aa).

It belongs to the RNA polymerase alpha chain family. As to quaternary structure, homodimer. The RNAP catalytic core consists of 2 alpha, 1 beta, 1 beta' and 1 omega subunit. When a sigma factor is associated with the core the holoenzyme is formed, which can initiate transcription.

The enzyme catalyses RNA(n) + a ribonucleoside 5'-triphosphate = RNA(n+1) + diphosphate. Its function is as follows. DNA-dependent RNA polymerase catalyzes the transcription of DNA into RNA using the four ribonucleoside triphosphates as substrates. The sequence is that of DNA-directed RNA polymerase subunit alpha from Herpetosiphon aurantiacus (strain ATCC 23779 / DSM 785 / 114-95).